A 364-amino-acid chain; its full sequence is Oxidized polyvinyl alcohol hydrolase (364 aa).

Residues 1-34 form the signal peptide; it reads MFKPVVKSRSSRSFCYLAGCLAMVAATLSSTAQA. Residues S190 and S293 each act as charge relay system in the active site.

Belongs to the peptidase S9A family. As to quaternary structure, monomer.

It localises to the periplasm. It catalyses the reaction nonane-4,6-dione + H2O = pentan-2-one + butanoate + H(+). Its function is as follows. Catalyzes the hydrolysis of 4,6-nonanedione, a beta-diketone compound. Also mediates hydrolysis of oxidized polyvinyl alcohol (PVA) in the second step in the degradation of polyvinyl alcohol. Not active toward the monoketone structure. The chain is Oxidized polyvinyl alcohol hydrolase (oph) from Sphingopyxis sp. (strain 113P3).